The chain runs to 584 residues: MTHIKEFFTKLSESSSNQNISNIPKKKKKLFLALFATLLVVAAVIGIVAGVNSRKNSGDNGNEPHHAILKSSCSSTRYPDLCFSAIAAVPEASKKVTSQKDVIEMSLNITTTAVEHNYFGIQKLLKRTNLTKREKVALHDCLETIDETLDELHKAVEDLEEYPNKKSLSQHADDLKTLMSAAMTNQGTCLDGFSHDDANKHVRDALSDGQVHVEKMCSNALAMIKNMTDTDMMIMRTSNNRKLTEETSTVDGWPAWLSPGDRRLLQSSSVTPNAVVAADGSGNFKTVAAAVAAAPQGGTKRYIIRIKAGVYRENVEVTKKHKNIMFIGDGRTRTIITGSRNVVDGSTTFKSATAAVVGEGFLARDITFQNTAGPSKHQAVALRVGADLSAFYNCDMLAYQDTLYVHSNRQFFVNCLIAGTVDFIFGNAAAVLQNCDIHARKPNSGQKNMVTAQGRTDPNQNTGIVIQKSRIGATSDLKPVQGSFPTYLGRPWKEYSRTVIMQSSITDLIHPAGWHEWDGNFALNTLFYGEHQNSGAGAGTSGRVKWKGFRVITSATEAQAFTPGSFIAGSSWLGSTGFPFSLGL.

The N-terminal stretch at 1–42 (MTHIKEFFTKLSESSSNQNISNIPKKKKKLFLALFATLLVVA) is a signal peptide. Asparagine 108, asparagine 129, and asparagine 226 each carry an N-linked (GlcNAc...) asparagine glycan. Threonine 348 and glutamine 378 together coordinate substrate. Aspartate 401 serves as the catalytic Proton donor. A disulfide bond links cysteine 415 and cysteine 435. Aspartate 422 (nucleophile) is an active-site residue. Residues arginine 490 and tryptophan 492 each coordinate substrate.

It in the N-terminal section; belongs to the PMEI family. The protein in the C-terminal section; belongs to the pectinesterase family. In terms of tissue distribution, expressed at high levels in flower buds, shoots and young leaves, and at lower levels in young fruit, young bark and juice vesicles. Not expressed at significant levels in leaf abscission zones following ethylene treatment or in mature leaves. In fruit abscission zones, expression was initially undetectable but increased markedly following ethylene treatment.

It localises to the secreted. The protein localises to the cell wall. The catalysed reaction is [(1-&gt;4)-alpha-D-galacturonosyl methyl ester](n) + n H2O = [(1-&gt;4)-alpha-D-galacturonosyl](n) + n methanol + n H(+). Its pathway is glycan metabolism; pectin degradation; 2-dehydro-3-deoxy-D-gluconate from pectin: step 1/5. In terms of biological role, acts in the modification of cell walls via demethylesterification of cell wall pectin. In Citrus sinensis (Sweet orange), this protein is Pectinesterase 1 (PECS-1.1).